Consider the following 244-residue polypeptide: MAKRRGQPLDGVLLLDKPVGLSSNHALQRAKRTLDAAKAGHTGTLDPFATGLLLCCMGRATKISGAMLNADKTYRATLQFGEETDSGDLTGNIVARAPEDFPGVEEANLREVLSRFQGSIEQIPPMYSALKRDGKPLYEYARAGIELERPPRRVMIYRIELLSFTGHQAEIDVACSKGTYIRTLAQDIGRALGCYAHLFALRRTQVGPFSLDRAVTLDALQAMTDPKAALLALNELPAGLLPAT.

Aspartate 46 acts as the Nucleophile in catalysis.

This sequence belongs to the pseudouridine synthase TruB family. Type 1 subfamily.

The catalysed reaction is uridine(55) in tRNA = pseudouridine(55) in tRNA. Its function is as follows. Responsible for synthesis of pseudouridine from uracil-55 in the psi GC loop of transfer RNAs. The sequence is that of tRNA pseudouridine synthase B from Bordetella avium (strain 197N).